Consider the following 65-residue polypeptide: Cell death protein rpr (65 aa).

Interacts with Diap2 (via BIR2 domain).

In terms of biological role, activator of apoptosis, as well as grim and hid, that acts on the effector Dredd. The chain is Cell death protein rpr (rpr) from Drosophila melanogaster (Fruit fly).